The primary structure comprises 184 residues: UPF0149 protein Pmen_0324 (184 aa).

Belongs to the UPF0149 family.

This chain is UPF0149 protein Pmen_0324, found in Ectopseudomonas mendocina (strain ymp) (Pseudomonas mendocina).